The primary structure comprises 359 residues: Protein PAM71-homolog, chloroplastic (359 aa).

A chloroplast-targeting transit peptide spans 1-66; that stretch reads MKLTSLSKNA…DLLWGKFRVR (66 aa). The disordered stretch occupies residues 71 to 102; it reads GVGSGSYSGGEEDGSQSSSLDQSPATSSESLK. A compositionally biased stretch (low complexity) spans 85–98; it reads SQSSSLDQSPATSS. Helical transmembrane passes span 110–130, 149–169, 177–197, 207–227, 269–289, 311–331, and 339–359; these read SLSI…ITFV, AFSL…AALL, LVLL…VVIG, FQTT…FFGL, LTNP…AEWG, GAIA…AFLA, and VGYV…FGVF.

It belongs to the GDT1 family.

Its subcellular location is the plastid. It is found in the chloroplast membrane. Its function is as follows. Probable chloroplast-localized Mn(2+)/H(+) and/or Ca(2+)/H(+) antiporter regulating Ca(2+), Mn(2+) and pH homeostasis. The sequence is that of Protein PAM71-homolog, chloroplastic from Arabidopsis thaliana (Mouse-ear cress).